Reading from the N-terminus, the 505-residue chain is Autophagy-related protein 18 (505 aa).

WD repeat units follow at residues 246–286 and 291–330; these read AHKG…KLYQ and TYPT…EERT. Residues 287 to 291 carry the L/FRRG motif motif; that stretch reads FRRGT. The disordered stretch occupies residues 328–380; it reads ERTSGGADDADSDDSGNENDGDNNSVGNGDVSSLLSDNDIESTREPYVDASRK. Over residues 335 to 348 the composition is skewed to acidic residues; that stretch reads DDADSDDSGNENDG. Positions 349–360 are enriched in low complexity; the sequence is DNNSVGNGDVSS. The span at 368 to 379 shows a compositional bias: basic and acidic residues; sequence ESTREPYVDASR.

The protein belongs to the WD repeat PROPPIN family. As to quaternary structure, component of the PI(3,5)P2 regulatory complex.

It localises to the preautophagosomal structure membrane. It is found in the vacuole membrane. The protein localises to the endosome membrane. The PI(3,5)P2 regulatory complex regulates both the synthesis and turnover of phosphatidylinositol 3,5-bisphosphate (PtdIns(3,5)P2). Necessary for proper vacuole morphology. Plays an important role in osmotically-induced vacuole fragmentation. Required for cytoplasm to vacuole transport (Cvt) vesicle formation, pexophagy and starvation-induced autophagy. Involved in correct ATG9 trafficking to the pre-autophagosomal structure. Might also be involved in premeiotic DNA replication. The sequence is that of Autophagy-related protein 18 (ATG18) from Candida glabrata (strain ATCC 2001 / BCRC 20586 / JCM 3761 / NBRC 0622 / NRRL Y-65 / CBS 138) (Yeast).